A 320-amino-acid polypeptide reads, in one-letter code: Beta-ketoacyl-[acyl-carrier-protein] synthase III (320 aa).

Catalysis depends on residues Cys-114 and His-247. The ACP-binding stretch occupies residues 248 to 252 (QANRR). Asn-277 is an active-site residue.

This sequence belongs to the thiolase-like superfamily. FabH family. Homodimer.

The protein localises to the cytoplasm. The catalysed reaction is malonyl-[ACP] + acetyl-CoA + H(+) = 3-oxobutanoyl-[ACP] + CO2 + CoA. It participates in lipid metabolism; fatty acid biosynthesis. Functionally, catalyzes the condensation reaction of fatty acid synthesis by the addition to an acyl acceptor of two carbons from malonyl-ACP. Catalyzes the first condensation reaction which initiates fatty acid synthesis and may therefore play a role in governing the total rate of fatty acid production. Possesses both acetoacetyl-ACP synthase and acetyl transacylase activities. Its substrate specificity determines the biosynthesis of branched-chain and/or straight-chain of fatty acids. This Neisseria meningitidis serogroup B (strain ATCC BAA-335 / MC58) protein is Beta-ketoacyl-[acyl-carrier-protein] synthase III.